A 499-amino-acid polypeptide reads, in one-letter code: Cytosol aminopeptidase (499 aa).

Mn(2+) is bound by residues K267 and D272. Residue K279 is part of the active site. Mn(2+) contacts are provided by D290, D349, and E351. Residue R353 is part of the active site.

The protein belongs to the peptidase M17 family. Requires Mn(2+) as cofactor.

Its subcellular location is the cytoplasm. It carries out the reaction Release of an N-terminal amino acid, Xaa-|-Yaa-, in which Xaa is preferably Leu, but may be other amino acids including Pro although not Arg or Lys, and Yaa may be Pro. Amino acid amides and methyl esters are also readily hydrolyzed, but rates on arylamides are exceedingly low.. The catalysed reaction is Release of an N-terminal amino acid, preferentially leucine, but not glutamic or aspartic acids.. In terms of biological role, presumably involved in the processing and regular turnover of intracellular proteins. Catalyzes the removal of unsubstituted N-terminal amino acids from various peptides. The polypeptide is Cytosol aminopeptidase (pepA) (Buchnera aphidicola subsp. Acyrthosiphon pisum (strain APS) (Acyrthosiphon pisum symbiotic bacterium)).